We begin with the raw amino-acid sequence, 177 residues long: FMRFamide-like neuropeptides 7 (177 aa).

The first 19 residues, 1–19 (MLGSRFLLLALGLLVLVLA), serve as a signal peptide directing secretion. A propeptide spanning residues 20–49 (EESAEQQVQEPTELEKSGEQLSEEDLIDEQ) is cleaved from the precursor. The interval 25 to 106 (QQVQEPTELE…RSSMVRFGKR (82 aa)) is disordered. A phenylalanine amide mark is found at phenylalanine 62, phenylalanine 75, phenylalanine 89, phenylalanine 103, phenylalanine 117, and phenylalanine 130. Leucine 143 carries the leucine amide modification. Phenylalanine 157 carries the phenylalanine amide modification. A propeptide spanning residues 161–177 (SMEFEMQSNEKNIEDSE) is cleaved from the precursor.

This sequence belongs to the FARP (FMRFamide related peptide) family. In terms of tissue distribution, expressed in the ASI sensory neurons, the ALA interneuron and the AVG interneuron from where secretion occurs. Expression in the ASI neurons is necessary and sufficient to maintain serotonin-induced fat loss.

It localises to the secreted. Its function is as follows. FMRFamide-like neuropeptides. Stimulates serotonin-induced fat loss by binding to and activating the npr-22 receptor which leads to induction of the atgl-1 lipase and subsequent fat loss. Together with atfs-1, negatively regulates the expression of the transcription regulator hlh-11, to promote expression of atgl-1, and thus atgl-1-dependent fat oxidation in response to mitochondrial stress. Functionally, TPMQRSSMVRF-amide: Acts as a ligand for the npr-22 receptor in vitro. SPMQRSSMVRF-amide: Acts as a ligand for the npr-22 receptor in vitro. In terms of biological role, acts as a ligand for the npr-22 receptor in vitro. This is FMRFamide-like neuropeptides 7 from Caenorhabditis elegans.